A 249-amino-acid polypeptide reads, in one-letter code: ATP synthase subunit a, chloroplastic (249 aa).

The next 5 membrane-spanning stretches (helical) occupy residues 40–60, 97–117, 136–156, 201–221, and 222–242; these read QVLI…VLAV, VPFI…GALL, INTT…AGLS, LVVV…VMFL, and GLFT…AYIG.

Belongs to the ATPase A chain family. F-type ATPases have 2 components, CF(1) - the catalytic core - and CF(0) - the membrane proton channel. CF(1) has five subunits: alpha(3), beta(3), gamma(1), delta(1), epsilon(1). CF(0) has four main subunits: a, b, b' and c.

Its subcellular location is the plastid. The protein localises to the chloroplast thylakoid membrane. Functionally, key component of the proton channel; it plays a direct role in the translocation of protons across the membrane. This Draba nemorosa (Woodland whitlowgrass) protein is ATP synthase subunit a, chloroplastic.